The sequence spans 601 residues: 66 kDa stress protein (601 aa).

WD repeat units lie at residues 56–95, 100–143, 145–184, 187–226, 233–272, 318–357, 435–478, 483–522, 526–565, and 569–600; these read EHAQPATVAKYAPSGFYIASGDLSGTLRIWDTTQLEHPLK, VLSG…GEIT, HSKAIASCDFKATRPFRVITGAEDFQANWFEGPPFKFKHA, EHTRFLTCVRFSPDGEKVLTVGLDKKGFILDGKTGEKVGA, AHALGIYSCSWSPDSKKVLTVSADKSAKIWDDKGTLLTTF, GHNKLVTSLAFDTASKALYSGSYDGVILQWNLETGIAVPI, ASTT…LSEQ, GHRGFLTAIAYSPDGKHFASADQNRDIFVWDKASRKIKVE, YHNARVTSLAWNSNSNNIVTGSLDSHVYVWSVSEPSKHIA, and AHRGGVNAVLWVDEHTVASAGLDCSIKTWTIK.

It belongs to the WD repeat AIP1 family.

Its function is as follows. Associated with the process of cyst formation. The chain is 66 kDa stress protein from Physarum polycephalum (Slime mold).